Consider the following 358-residue polypeptide: tRNA-specific 2-thiouridylase MnmA (358 aa).

Residues 8–15 (AMSGGVDS) and M35 each bind ATP. The tract at residues 95-97 (NPD) is interaction with target base in tRNA. C100 functions as the Nucleophile in the catalytic mechanism. The cysteines at positions 100 and 194 are disulfide-linked. G124 provides a ligand contact to ATP. The tract at residues 144-146 (KDQ) is interaction with tRNA. C194 (cysteine persulfide intermediate) is an active-site residue. The interval 301-302 (RY) is interaction with tRNA.

It belongs to the MnmA/TRMU family.

The protein resides in the cytoplasm. The enzyme catalyses S-sulfanyl-L-cysteinyl-[protein] + uridine(34) in tRNA + AH2 + ATP = 2-thiouridine(34) in tRNA + L-cysteinyl-[protein] + A + AMP + diphosphate + H(+). In terms of biological role, catalyzes the 2-thiolation of uridine at the wobble position (U34) of tRNA, leading to the formation of s(2)U34. The protein is tRNA-specific 2-thiouridylase MnmA of Chlamydia trachomatis serovar D (strain ATCC VR-885 / DSM 19411 / UW-3/Cx).